The sequence spans 252 residues: Phosphate import ATP-binding protein PstB 1 (252 aa).

In terms of domain architecture, ABC transporter spans 6–247 (LQVSDLSVYY…PKHKETEDYI (242 aa)). An ATP-binding site is contributed by 38 to 45 (GPSGSGKS).

This sequence belongs to the ABC transporter superfamily. Phosphate importer (TC 3.A.1.7) family. As to quaternary structure, the complex is composed of two ATP-binding proteins (PstB), two transmembrane proteins (PstC and PstA) and a solute-binding protein (PstS).

It is found in the cell membrane. It carries out the reaction phosphate(out) + ATP + H2O = ADP + 2 phosphate(in) + H(+). Its function is as follows. Part of the ABC transporter complex PstSACB involved in phosphate import. Responsible for energy coupling to the transport system. The sequence is that of Phosphate import ATP-binding protein PstB 1 from Streptococcus agalactiae serotype Ia (strain ATCC 27591 / A909 / CDC SS700).